The following is a 620-amino-acid chain: 1-deoxy-D-xylulose-5-phosphate synthase (620 aa).

Residues His80 and 121-123 (GHS) contribute to the thiamine diphosphate site. Asp152 provides a ligand contact to Mg(2+). Thiamine diphosphate contacts are provided by residues 153–154 (GA), Asn181, Tyr288, and Glu370. Asn181 serves as a coordination point for Mg(2+).

Belongs to the transketolase family. DXPS subfamily. In terms of assembly, homodimer. The cofactor is Mg(2+). Requires thiamine diphosphate as cofactor.

It catalyses the reaction D-glyceraldehyde 3-phosphate + pyruvate + H(+) = 1-deoxy-D-xylulose 5-phosphate + CO2. It functions in the pathway metabolic intermediate biosynthesis; 1-deoxy-D-xylulose 5-phosphate biosynthesis; 1-deoxy-D-xylulose 5-phosphate from D-glyceraldehyde 3-phosphate and pyruvate: step 1/1. Functionally, catalyzes the acyloin condensation reaction between C atoms 2 and 3 of pyruvate and glyceraldehyde 3-phosphate to yield 1-deoxy-D-xylulose-5-phosphate (DXP). This Pseudoalteromonas translucida (strain TAC 125) protein is 1-deoxy-D-xylulose-5-phosphate synthase.